The chain runs to 234 residues: Purine nucleoside phosphorylase DeoD-type (234 aa).

Histidine 4 lines the a purine D-ribonucleoside pocket. Phosphate contacts are provided by residues glycine 20, arginine 24, arginine 43, and 87–90 (RVGT). Residues 179-181 (EME) and 203-204 (SN) each bind a purine D-ribonucleoside.

This sequence belongs to the PNP/UDP phosphorylase family. As to quaternary structure, homohexamer; trimer of homodimers.

It carries out the reaction a purine D-ribonucleoside + phosphate = a purine nucleobase + alpha-D-ribose 1-phosphate. The enzyme catalyses a purine 2'-deoxy-D-ribonucleoside + phosphate = a purine nucleobase + 2-deoxy-alpha-D-ribose 1-phosphate. In terms of biological role, catalyzes the reversible phosphorolytic breakdown of the N-glycosidic bond in the beta-(deoxy)ribonucleoside molecules, with the formation of the corresponding free purine bases and pentose-1-phosphate. The protein is Purine nucleoside phosphorylase DeoD-type of Latilactobacillus sakei subsp. sakei (strain 23K) (Lactobacillus sakei subsp. sakei).